The following is a 74-amino-acid chain: Exodeoxyribonuclease 7 small subunit (74 aa).

It belongs to the XseB family. As to quaternary structure, heterooligomer composed of large and small subunits.

Its subcellular location is the cytoplasm. It catalyses the reaction Exonucleolytic cleavage in either 5'- to 3'- or 3'- to 5'-direction to yield nucleoside 5'-phosphates.. Bidirectionally degrades single-stranded DNA into large acid-insoluble oligonucleotides, which are then degraded further into small acid-soluble oligonucleotides. In Leuconostoc citreum (strain KM20), this protein is Exodeoxyribonuclease 7 small subunit.